We begin with the raw amino-acid sequence, 450 residues long: Bifunctional protein GlmU (450 aa).

Residues 1–226 (MLAVAVLAAG…PDEVNGINNR (226 aa)) are pyrophosphorylase. UDP-N-acetyl-alpha-D-glucosamine is bound by residues 7 to 10 (LAAG), Lys-21, Gln-73, and 78 to 79 (GT). A Mg(2+)-binding site is contributed by Asp-103. Residues Gly-140, Glu-155, Asn-170, and Asn-224 each coordinate UDP-N-acetyl-alpha-D-glucosamine. Mg(2+) is bound at residue Asn-224. Positions 227-247 (QQLAQCETMLQERLRHHWMAE) are linker. The interval 248–450 (GVTFVDPASC…IKENWAGPQG (203 aa)) is N-acetyltransferase. UDP-N-acetyl-alpha-D-glucosamine-binding residues include Arg-329 and Lys-347. The active-site Proton acceptor is the His-359. UDP-N-acetyl-alpha-D-glucosamine contacts are provided by Tyr-362 and Asn-373. Residues Ala-376, 382 to 383 (NY), Ala-419, and Arg-436 each bind acetyl-CoA.

It in the N-terminal section; belongs to the N-acetylglucosamine-1-phosphate uridyltransferase family. The protein in the C-terminal section; belongs to the transferase hexapeptide repeat family. As to quaternary structure, homotrimer. Mg(2+) is required as a cofactor.

Its subcellular location is the cytoplasm. It catalyses the reaction alpha-D-glucosamine 1-phosphate + acetyl-CoA = N-acetyl-alpha-D-glucosamine 1-phosphate + CoA + H(+). The catalysed reaction is N-acetyl-alpha-D-glucosamine 1-phosphate + UTP + H(+) = UDP-N-acetyl-alpha-D-glucosamine + diphosphate. Its pathway is nucleotide-sugar biosynthesis; UDP-N-acetyl-alpha-D-glucosamine biosynthesis; N-acetyl-alpha-D-glucosamine 1-phosphate from alpha-D-glucosamine 6-phosphate (route II): step 2/2. It functions in the pathway nucleotide-sugar biosynthesis; UDP-N-acetyl-alpha-D-glucosamine biosynthesis; UDP-N-acetyl-alpha-D-glucosamine from N-acetyl-alpha-D-glucosamine 1-phosphate: step 1/1. It participates in bacterial outer membrane biogenesis; LPS lipid A biosynthesis. Its function is as follows. Catalyzes the last two sequential reactions in the de novo biosynthetic pathway for UDP-N-acetylglucosamine (UDP-GlcNAc). The C-terminal domain catalyzes the transfer of acetyl group from acetyl coenzyme A to glucosamine-1-phosphate (GlcN-1-P) to produce N-acetylglucosamine-1-phosphate (GlcNAc-1-P), which is converted into UDP-GlcNAc by the transfer of uridine 5-monophosphate (from uridine 5-triphosphate), a reaction catalyzed by the N-terminal domain. The polypeptide is Bifunctional protein GlmU (Synechococcus sp. (strain RCC307)).